Here is a 382-residue protein sequence, read N- to C-terminus: Proton extrusion protein PxcA (382 aa).

4 consecutive transmembrane segments (helical) span residues 156 to 176 (TLIS…VQQI), 257 to 277 (AIKN…VCII), 305 to 325 (IILF…QVLL), and 340 to 360 (FILL…KYWI).

It belongs to the CemA family.

The protein localises to the cell inner membrane. In terms of biological role, required for H(+) efflux immediately after light irradiation to form a rapid H(+) concentration gradient across the thylakoid membranes. Together with PxcL, contributes to transient H(+) uptake following dark to light transition. The polypeptide is Proton extrusion protein PxcA (Prochlorococcus marinus (strain MIT 9313)).